The sequence spans 287 residues: uncharacterized protein (287 aa).

In terms of domain architecture, ATP-grasp spans 115–287 (SLLSKETIKS…KKFLKKKLIS (173 aa)).

This is an uncharacterized protein from Mycoplasma genitalium (strain ATCC 33530 / DSM 19775 / NCTC 10195 / G37) (Mycoplasmoides genitalium).